Here is a 61-residue protein sequence, read N- to C-terminus: Small ribosomal subunit protein uS14 (61 aa).

The Zn(2+) site is built by cysteine 24, cysteine 27, cysteine 40, and cysteine 43.

Belongs to the universal ribosomal protein uS14 family. Zinc-binding uS14 subfamily. As to quaternary structure, part of the 30S ribosomal subunit. Contacts proteins S3 and S10. The cofactor is Zn(2+).

Binds 16S rRNA, required for the assembly of 30S particles and may also be responsible for determining the conformation of the 16S rRNA at the A site. The sequence is that of Small ribosomal subunit protein uS14 from Campylobacter hominis (strain ATCC BAA-381 / DSM 21671 / CCUG 45161 / LMG 19568 / NCTC 13146 / CH001A).